Consider the following 242-residue polypeptide: Polycomb group RING finger protein 3 (242 aa).

Residues 17 to 56 form an RING-type zinc finger; that stretch reads CRLCSGYLIDATTVTECLHTFCRSCLVKYLEENNTCPTCR. A disordered region spans residues 115-149; sequence AKQHLDPHRNGETKADDSSNKEAAEEKQEEDGDYH. A compositionally biased stretch (basic and acidic residues) spans 117–140; it reads QHLDPHRNGETKADDSSNKEAAEE. The segment at 132–242 is interaction with BCORL1; the sequence is SSNKEAAEEK…LHYRPKMDLL (111 aa).

Component of a PRC1-like complex that contains PCGF3, RNF2 and RYBP. Interacts with CBX6, CBX7 and CBX8. Interacts with BCORL1.

The protein localises to the nucleus. It is found in the nucleoplasm. In terms of biological role, component of a Polycomb group (PcG) multiprotein PRC1-like complex, a complex class required to maintain the transcriptionally repressive state of many genes, including Hox genes, throughout development. PcG PRC1 complex acts via chromatin remodeling and modification of histones; it mediates monoubiquitination of histone H2A 'Lys-119', rendering chromatin heritably changed in its expressibility. Within the PRC1-like complex, regulates RNF2 ubiquitin ligase activity. Plays a redundant role with PCGF5 as part of a PRC1-like complex that mediates monoubiquitination of histone H2A 'Lys-119' on the X chromosome and is required for normal silencing of one copy of the X chromosome in XX females. This is Polycomb group RING finger protein 3 (PCGF3) from Bos taurus (Bovine).